The primary structure comprises 1004 residues: Copper-transporting ATPase (1004 aa).

Residues 1–262 (MREVILAVHG…FWKKNSIKST (262 aa)) lie on the Cytoplasmic side of the membrane. 2 consecutive HMA domains span residues 2-67 (REVI…FDCE) and 80-146 (KEGL…FDSN). Positions 13, 16, 91, and 94 each coordinate Cu(+). A helical transmembrane segment spans residues 263-283 (LLAIICMLLYMIVPMMWPTIV). Residues 284-303 (QDRIFPYKETSFVRGLFYRD) lie on the Lumenal, vesicle side of the membrane. The chain crosses the membrane as a helical span at residues 304–324 (ILGVILASYIQFSVGFYFYKA). Over 325 to 335 (AWASLKHGSGT) the chain is Cytoplasmic. A helical membrane pass occupies residues 336–356 (MDTLVCVSTTCAYTFSVFSLV). The Lumenal, vesicle portion of the chain corresponds to 357–370 (HNMFHPSSTGKLPR). Residues 371-391 (IVFDTSIMIISYISIGKYLET) traverse the membrane as a helical segment. The Cytoplasmic segment spans residues 392–528 (LAKSQTSTAL…IQGYADYLAS (137 aa)). A helical membrane pass occupies residues 529 to 549 (IFVPGILILAVLTFFIWCFIL). Topologically, residues 550–577 (NISANPPVAFTANTKADNFFICLQTATS) are lumenal, vesicle. Residues 578–598 (VVIVACPCALGLATPTAIMVG) form a helical membrane-spanning segment. Residues 599–901 (TGVGAQNGVL…LKTFKRIKLN (303 aa)) are Cytoplasmic-facing. The active-site 4-aspartylphosphate intermediate is the Asp-627. Mg(2+) contacts are provided by Asp-838 and Asp-842. Residues 902–924 (LFWALCYNIFMIPIAMGVLIPWG) form a helical membrane-spanning segment. Residues 925-927 (ITL) are Lumenal, vesicle-facing. A helical membrane pass occupies residues 928–950 (PPMLAGLAMAFSSVSVVLSSLML). The Cytoplasmic portion of the chain corresponds to 951–1004 (KKWTPPDIESHGISDFKSKFSIGNFWSRLFSTRAIAGEQDIESQAGLMSNEEVL).

Belongs to the cation transport ATPase (P-type) (TC 3.A.3) family. Type IB subfamily. As to quaternary structure, interacts with the copper chaperone ATX1 via the copper anion.

Its subcellular location is the golgi apparatus. It localises to the trans-Golgi network membrane. It catalyses the reaction Cu(+)(in) + ATP + H2O = Cu(+)(out) + ADP + phosphate + H(+). In terms of biological role, copper-transporting P-type ATPase necessary for the proper uptake of iron. Required for export of copper from cytosol into extracytosolic compartment. Retrieves copper from the metallochaperone ATX1 and incorporates it into trans-Golgi vesicles where they are acquired by the cell-surface iron transporter FET3. Required the production of inositolphosphorylceramide D, probably by delivering copper to a yet to be identified enzyme. The chain is Copper-transporting ATPase from Saccharomyces cerevisiae (strain ATCC 204508 / S288c) (Baker's yeast).